The chain runs to 84 residues: UPF0457 protein BALH_2270 (84 aa).

It belongs to the UPF0457 family.

The polypeptide is UPF0457 protein BALH_2270 (Bacillus thuringiensis (strain Al Hakam)).